The sequence spans 871 residues: Alanine--tRNA ligase (871 aa).

The Zn(2+) site is built by His559, His563, Cys661, and His665.

The protein belongs to the class-II aminoacyl-tRNA synthetase family. It depends on Zn(2+) as a cofactor.

It localises to the cytoplasm. The enzyme catalyses tRNA(Ala) + L-alanine + ATP = L-alanyl-tRNA(Ala) + AMP + diphosphate. Functionally, catalyzes the attachment of alanine to tRNA(Ala) in a two-step reaction: alanine is first activated by ATP to form Ala-AMP and then transferred to the acceptor end of tRNA(Ala). Also edits incorrectly charged Ser-tRNA(Ala) and Gly-tRNA(Ala) via its editing domain. This Aquifex pyrophilus protein is Alanine--tRNA ligase.